The chain runs to 408 residues: MKSVQEQMAIIRRGAVEILVESELEAKLKKSVETGVPLKVKAGFDPTAPDLHVGHTVLIQKLKQFQDLGHEVNFLIGDFTGMIGDPTGKNETRKALTREEVLKNAETYKQQVFKILDPERTKVVFNSSWMGQMSAADLIGLAGRYTVARMLERDDFHKRFSGQQPIAIHEFLYPLVQGYDSVALKADVELGGTDQKFNLLVGRELQKQEGQVPQCVLTMPLLEGLDGVNKMSKSLGNYIGITEPAKEVFGKVMSISDELMLRYYELLSDVDLAQLQLVRDGVEGKAGGAHPMESKKSLARELVARFYDQAAALRAEEEFVQQFKQKEVPDDIPEVLIDAGEPVWICRLLTDAGLTASNGEARRLVKQGAVKLGGEKIADAGLEVAPAGELILQAGKRRFARIKFLEKK.

The short motif at 46 to 55 is the 'HIGH' region element; it reads PTAPDLHVGH. The 'KMSKS' region motif lies at 230 to 234; the sequence is KMSKS. K233 contributes to the ATP binding site. The 62-residue stretch at 343–404 folds into the S4 RNA-binding domain; sequence VWICRLLTDA…GKRRFARIKF (62 aa).

It belongs to the class-I aminoacyl-tRNA synthetase family. TyrS type 2 subfamily. In terms of assembly, homodimer.

It localises to the cytoplasm. The catalysed reaction is tRNA(Tyr) + L-tyrosine + ATP = L-tyrosyl-tRNA(Tyr) + AMP + diphosphate + H(+). Functionally, catalyzes the attachment of tyrosine to tRNA(Tyr) in a two-step reaction: tyrosine is first activated by ATP to form Tyr-AMP and then transferred to the acceptor end of tRNA(Tyr). This chain is Tyrosine--tRNA ligase, found in Syntrophotalea carbinolica (strain DSM 2380 / NBRC 103641 / GraBd1) (Pelobacter carbinolicus).